Reading from the N-terminus, the 254-residue chain is Keratin-associated protein 24-1 (254 aa).

A run of 6 repeats spans residues 193 to 202 (YISNSCQPQS), 203 to 212 (YLVRNYHYSS), 213 to 222 (YRPTSCRPLS), 223 to 232 (YLSRSFRSLS), 233 to 242 (YIPSTFPPLR), and 243 to 252 (YLCSGSRPLK). The 6 X 10 AA repeats of Y-[ILR]-[SVPC]-[NRTS]-[SNTG]-X-[QHRP]-[PSY]-[QSL]-[SRK] stretch occupies residues 193–252 (YISNSCQPQSYLVRNYHYSSYRPTSCRPLSYLSRSFRSLSYIPSTFPPLRYLCSGSRPLK).

This sequence belongs to the PMG family. In terms of assembly, interacts with hair keratins. In terms of tissue distribution, specific expression in the middle/upper hair cuticle.

In terms of biological role, in the hair cortex, hair keratin intermediate filaments are embedded in an interfilamentous matrix, consisting of hair keratin-associated proteins (KRTAP), which are essential for the formation of a rigid and resistant hair shaft through their extensive disulfide bond cross-linking with abundant cysteine residues of hair keratins. The matrix proteins include the high-sulfur and high-glycine-tyrosine keratins. This is Keratin-associated protein 24-1 (KRTAP24-1) from Homo sapiens (Human).